The sequence spans 166 residues: Endoribonuclease YbeY (166 aa).

Zn(2+) is bound by residues His126, His130, and His136.

It belongs to the endoribonuclease YbeY family. The cofactor is Zn(2+).

Its subcellular location is the cytoplasm. Functionally, single strand-specific metallo-endoribonuclease involved in late-stage 70S ribosome quality control and in maturation of the 3' terminus of the 16S rRNA. In Laribacter hongkongensis (strain HLHK9), this protein is Endoribonuclease YbeY.